Consider the following 203-residue polypeptide: Imidazole glycerol phosphate synthase subunit HisH 1 (203 aa).

One can recognise a Glutamine amidotransferase type-1 domain in the interval 1–203 (MIAIIDYNAG…KMIENFVELI (203 aa)). The Nucleophile role is filled by Cys-82. Active-site residues include His-184 and Glu-186.

Heterodimer of HisH and HisF.

It is found in the cytoplasm. The catalysed reaction is 5-[(5-phospho-1-deoxy-D-ribulos-1-ylimino)methylamino]-1-(5-phospho-beta-D-ribosyl)imidazole-4-carboxamide + L-glutamine = D-erythro-1-(imidazol-4-yl)glycerol 3-phosphate + 5-amino-1-(5-phospho-beta-D-ribosyl)imidazole-4-carboxamide + L-glutamate + H(+). It catalyses the reaction L-glutamine + H2O = L-glutamate + NH4(+). Its pathway is amino-acid biosynthesis; L-histidine biosynthesis; L-histidine from 5-phospho-alpha-D-ribose 1-diphosphate: step 5/9. Functionally, IGPS catalyzes the conversion of PRFAR and glutamine to IGP, AICAR and glutamate. The HisH subunit provides the glutamine amidotransferase activity that produces the ammonia necessary to HisF for the synthesis of IGP and AICAR. In Methanococcus maripaludis (strain DSM 14266 / JCM 13030 / NBRC 101832 / S2 / LL), this protein is Imidazole glycerol phosphate synthase subunit HisH 1 (hisH1).